The sequence spans 744 residues: Cell division cycle protein 27 homolog B (744 aa).

A TPR 1 repeat occupies 101–134 (AAGHYLLGLIYKYTDRRKNAAQQFKQSLTIDPLL). Residues 180–199 (NEERNSTSTKNTSSEDYSPR) show a composition bias toward polar residues. Disordered stretches follow at residues 180 to 218 (NEER…NFHS) and 359 to 390 (ENMD…NDQE). The span at 363–374 (EGVRGEPFDDSR) shows a compositional bias: basic and acidic residues. Over residues 375-387 (PNTASTTGSMASN) the composition is skewed to polar residues. TPR repeat units lie at residues 450–483 (GWVL…SPYC), 518–551 (PQSW…NPRF), 553–585 (YAHT…DTRH), 587–619 (NAWY…NPSS), 621–653 (VIMS…DRKN), 655–687 (LPMY…APSE), and 688–721 (SSVY…KPPA).

Belongs to the APC3/CDC27 family. In terms of assembly, the APC/C is composed of at least 10 subunits. Can homodimerize. Interacts with APC2, APC10, FZR2 and FZR3. Interacts with PANS1. Interacts with SAMBA. As to expression, specifically expressed in dividing and elongating cells.

The protein localises to the nucleus. It functions in the pathway protein modification; protein ubiquitination. Functionally, component of the anaphase promoting complex/cyclosome (APC/C), a cell cycle-regulated E3 ubiquitin-protein ligase complex that controls progression through mitosis and the G1 phase of the cell cycle. The APC/C complex controls several key steps in the cell cycle by mediating ubiquitination and subsequent degradation of target proteins such as cyclins. The APC/C complex is required for the female gametophyte development and is involved in several aspect of development by controlling cell division and cell elongation. Involved in the control of endoreduplication. Functionally redundant with CDC27A in the control of gametophyte development. This chain is Cell division cycle protein 27 homolog B (CDC27B), found in Arabidopsis thaliana (Mouse-ear cress).